The following is a 35-amino-acid chain: Photosystem II reaction center protein Psb30 (35 aa).

The helical transmembrane segment at 7 to 27 (LIANFGALALITLAGPAVIFI) threads the bilayer.

The protein belongs to the Psb30/Ycf12 family. As to quaternary structure, PSII is composed of 1 copy each of membrane proteins PsbA, PsbB, PsbC, PsbD, PsbE, PsbF, PsbH, PsbI, PsbJ, PsbK, PsbL, PsbM, PsbT, PsbX, PsbY, PsbZ, Psb30/Ycf12, peripheral proteins PsbO, CyanoQ (PsbQ), PsbU, PsbV and a large number of cofactors. It forms dimeric complexes.

It localises to the cellular thylakoid membrane. Its function is as follows. A core subunit of photosystem II (PSII), probably helps stabilize the reaction center. The protein is Photosystem II reaction center protein Psb30 of Synechococcus sp. (strain CC9311).